The following is a 250-amino-acid chain: uncharacterized protein (250 aa).

Residues 182 to 205 are disordered; the sequence is HTPIVSIQTPPPPAPTPNRPDVPA. Pro residues predominate over residues 190–201; it reads TPPPPAPTPNRP. A helical membrane pass occupies residues 230–250; sequence TRISVIPLLSVLLLVIIIILL.

It belongs to the ascovirus HvAV ORF18 family.

It is found in the membrane. This is an uncharacterized protein from Spodoptera frugiperda ascovirus 1a (SfAV-1a).